The chain runs to 532 residues: MEGDSYGNATTINGTPVNHQPLERHRLWEVITIAAVTAVVSLITIVGNVLVMISFKVNSQLKTVNNYYLLSLACADLIIGIFSMNLYTTYILMGRWALGSLACDLWLALDYVASNASVMNLLVISFDRYFSITRPLTYRAKRTPKRAGIMIGLAWLISFILWAPAILCWQYLVGKRTVPPDECQIQFLSEPTITFGTAIAAFYIPVSVMTILYCRIYRETEKRTKDLADLQGSVSVTKAEKRKPAHRALFRSCFRCPRPTLVQRERNQASRSSSHRSTSITGKPSQATGPSTNWAKAEELTTCSSYPSSEDEDKPATDPVLQVVYKSQGKESPGEEFSAEEAEETFVKGQTDKNDCDSPDYFLSPAAAHRPKSQQCVAYKFQLVVKADGTQETNNGCHKVKIMPCSFPVAKEPSTKGLSPNLSHQMTKRKRMVLVKERKAAQTLSAILLAFIITWTPYNIMVLVSTFCDKCVPVALWHLGYWLCYVNSTVNPICYALCNRTFRKTFKMLLLCQWKKKKVEEKLYWQGNSKLP.

The Extracellular portion of the chain corresponds to 1–29; the sequence is MEGDSYGNATTINGTPVNHQPLERHRLWE. N8 carries an N-linked (GlcNAc...) asparagine glycan. Residues 30-53 traverse the membrane as a helical segment; it reads VITIAAVTAVVSLITIVGNVLVMI. The Cytoplasmic portion of the chain corresponds to 54-66; it reads SFKVNSQLKTVNN. A helical membrane pass occupies residues 67–87; sequence YYLLSLACADLIIGIFSMNLY. Residues 88-104 are Extracellular-facing; the sequence is TTYILMGRWALGSLACD. The helical transmembrane segment at 105–126 threads the bilayer; that stretch reads LWLALDYVASNASVMNLLVISF. Residues 127 to 146 are Cytoplasmic-facing; the sequence is DRYFSITRPLTYRAKRTPKR. Residues 147–169 traverse the membrane as a helical segment; it reads AGIMIGLAWLISFILWAPAILCW. At 170-191 the chain is on the extracellular side; sequence QYLVGKRTVPPDECQIQFLSEP. Residues 192 to 214 traverse the membrane as a helical segment; the sequence is TITFGTAIAAFYIPVSVMTILYC. Residues 215–443 lie on the Cytoplasmic side of the membrane; it reads RIYRETEKRT…LVKERKAAQT (229 aa). The tract at residues 263–294 is disordered; it reads QRERNQASRSSSHRSTSITGKPSQATGPSTNW. Low complexity predominate over residues 270–279; the sequence is SRSSSHRSTS. Polar residues predominate over residues 280–294; that stretch reads ITGKPSQATGPSTNW. The helical transmembrane segment at 444 to 464 threads the bilayer; the sequence is LSAILLAFIITWTPYNIMVLV. Over 465 to 478 the chain is Extracellular; that stretch reads STFCDKCVPVALWH. The helical transmembrane segment at 479-498 threads the bilayer; the sequence is LGYWLCYVNSTVNPICYALC. Over 499–532 the chain is Cytoplasmic; it reads NRTFRKTFKMLLLCQWKKKKVEEKLYWQGNSKLP. T501 and T505 each carry phosphothreonine.

The protein belongs to the G-protein coupled receptor 1 family. Muscarinic acetylcholine receptor subfamily. CHRM5 sub-subfamily.

It localises to the cell membrane. The protein localises to the postsynaptic cell membrane. In terms of biological role, the muscarinic acetylcholine receptor mediates various cellular responses, including inhibition of adenylate cyclase, breakdown of phosphoinositides and modulation of potassium channels through the action of G proteins. Primary transducing effect is Pi turnover. In Saimiri boliviensis boliviensis (Bolivian squirrel monkey), this protein is Muscarinic acetylcholine receptor M5 (CHRM5).